The following is a 357-amino-acid chain: Pre-mRNA-splicing factor RBM22 homolog (357 aa).

Residues 153 to 180 form a C3H1-type zinc finger; sequence RNMARVCSFWRKNSCNRGDECPYLHKEI. Residues 222 to 295 enclose the RRM domain; the sequence is NKICIQGISE…CNLTVHLQDN (74 aa).

It belongs to the SLT11 family. As to quaternary structure, probable component of the spliceosome C complex.

The protein resides in the nucleus. In terms of biological role, involved in pre-mRNA splicing. Binds RNA. This is Pre-mRNA-splicing factor RBM22 homolog from Plasmodium falciparum (isolate 3D7).